Reading from the N-terminus, the 229-residue chain is 7-cyano-7-deazaguanine synthase (229 aa).

Residue 15–25 (LSGGLDSTTCL) participates in ATP binding. Cys-192, Cys-202, Cys-205, and Cys-208 together coordinate Zn(2+).

This sequence belongs to the QueC family. Zn(2+) serves as cofactor.

It carries out the reaction 7-carboxy-7-deazaguanine + NH4(+) + ATP = 7-cyano-7-deazaguanine + ADP + phosphate + H2O + H(+). Its pathway is purine metabolism; 7-cyano-7-deazaguanine biosynthesis. Catalyzes the ATP-dependent conversion of 7-carboxy-7-deazaguanine (CDG) to 7-cyano-7-deazaguanine (preQ(0)). In Acinetobacter baylyi (strain ATCC 33305 / BD413 / ADP1), this protein is 7-cyano-7-deazaguanine synthase.